The primary structure comprises 246 residues: YjeF N-terminal domain-containing 3 (246 aa).

Residues 24 to 234 form the YjeF N-terminal domain; that stretch reads VATVETELLR…DIQKKYELNL (211 aa).

In terms of assembly, interacts with apoa1a. Binds to high-density lipoprotein.

Its function is as follows. Accelerates cholesterol efflux from endothelial cells to high-density lipoprotein (HDL) and thereby regulates angiogenesis. Orchestrates hematopoietic stem and progenitor cell emergence from the hemogenic endothelium, a type of specialized endothelium manifesting hematopoietic potential. YJEFN3-mediated cholesterol efflux activates endothelial SREBF2, the master transcription factor for cholesterol biosynthesis, which in turn transactivates NOTCH and promotes hematopoietic stem and progenitor cell emergence. This is YjeF N-terminal domain-containing 3 from Danio rerio (Zebrafish).